The following is a 541-amino-acid chain: Glucose-6-phosphate isomerase (541 aa).

The active-site Proton donor is E346. Residues H377 and K506 contribute to the active site.

This sequence belongs to the GPI family.

It localises to the cytoplasm. It carries out the reaction alpha-D-glucose 6-phosphate = beta-D-fructose 6-phosphate. The protein operates within carbohydrate biosynthesis; gluconeogenesis. Its pathway is carbohydrate degradation; glycolysis; D-glyceraldehyde 3-phosphate and glycerone phosphate from D-glucose: step 2/4. In terms of biological role, catalyzes the reversible isomerization of glucose-6-phosphate to fructose-6-phosphate. The protein is Glucose-6-phosphate isomerase of Rhizobium meliloti (strain 1021) (Ensifer meliloti).